The following is a 123-amino-acid chain: Small ribosomal subunit protein uS12cz/uS12cy (123 aa).

Belongs to the universal ribosomal protein uS12 family. Part of the 30S ribosomal subunit.

The protein resides in the plastid. It is found in the chloroplast. Functionally, with S4 and S5 plays an important role in translational accuracy. Located at the interface of the 30S and 50S subunits. This is Small ribosomal subunit protein uS12cz/uS12cy (rps12-A) from Phaseolus vulgaris (Kidney bean).